The chain runs to 640 residues: Telomere repeat-binding protein 4 (640 aa).

The Ubiquitin-like domain occupies 343–422 (VKFSIKSLRI…LGNLGFTLEP (80 aa)). The segment at 442-464 (TDSTKLSERSAASPALETGIPLP) is disordered. One can recognise an HTH myb-type domain in the interval 530–589 (SQRRTRRPFSVTEVEALVSAVEEVGTGRWRDVKLRSFENASHRTYVDLKDKWKTLVHTAS). Positions 558–585 (WRDVKLRSFENASHRTYVDLKDKWKTLV) form a DNA-binding region, H-T-H motif.

Homomultimer. Interacts with SNL1 (via PAH2). Interacts with STO. In terms of tissue distribution, expressed ubiquitously. Highest expression in flowers and roots.

The protein localises to the nucleus. Its function is as follows. Binds specifically to the plant telomeric double-stranded DNA sequences 5'-TTTAGGG-3'. At least 2 repeats of telomeric sequences are required for binding. Induces DNA bending. This is Telomere repeat-binding protein 4 (TRP4) from Arabidopsis thaliana (Mouse-ear cress).